An 804-amino-acid chain; its full sequence is Leucine--tRNA ligase (804 aa).

Residues 39 to 50 carry the 'HIGH' region motif; the sequence is PFPSGKGLHVGH. A 'KMSKS' region motif is present at residues 573 to 577; the sequence is KMSKS. ATP is bound at residue Lys576.

This sequence belongs to the class-I aminoacyl-tRNA synthetase family.

Its subcellular location is the cytoplasm. The enzyme catalyses tRNA(Leu) + L-leucine + ATP = L-leucyl-tRNA(Leu) + AMP + diphosphate. This is Leucine--tRNA ligase from Lactobacillus acidophilus (strain ATCC 700396 / NCK56 / N2 / NCFM).